A 112-amino-acid chain; its full sequence is Protein lin-52 homolog (112 aa).

Belongs to the lin-52 family. In terms of assembly, component of the DREAM complex.

This is Protein lin-52 homolog (lin52) from Danio rerio (Zebrafish).